We begin with the raw amino-acid sequence, 234 residues long: Phosphoribosylaminoimidazole-succinocarboxamide synthase (234 aa).

Belongs to the SAICAR synthetase family.

The catalysed reaction is 5-amino-1-(5-phospho-D-ribosyl)imidazole-4-carboxylate + L-aspartate + ATP = (2S)-2-[5-amino-1-(5-phospho-beta-D-ribosyl)imidazole-4-carboxamido]succinate + ADP + phosphate + 2 H(+). It participates in purine metabolism; IMP biosynthesis via de novo pathway; 5-amino-1-(5-phospho-D-ribosyl)imidazole-4-carboxamide from 5-amino-1-(5-phospho-D-ribosyl)imidazole-4-carboxylate: step 1/2. In Sulfurisphaera tokodaii (strain DSM 16993 / JCM 10545 / NBRC 100140 / 7) (Sulfolobus tokodaii), this protein is Phosphoribosylaminoimidazole-succinocarboxamide synthase.